The chain runs to 1448 residues: MRPTEACCYLKISLIILFYMGCYAQKHPNMDIAVILVGTTEEVAIKDVHEKDDFHHLPVTPRVALVTMNESDPKSIITRICDLMSDKKVQGVVFGDDTDQEAIAQILDFISVQTLTPILGIHGGSSMIMADKEEASMFFQFGPSIEQQASVMLNIMEEYDWYIFSIVTTYFPGYQDFENKVRSTIENSFVGWELEEVIHLDMSLDDIDSKIQNQLKKLQSPVILLYCTKEEATYIFEVAHSVGLTGYGFTWIVPSLVAGDTDTVPDEFPTGLISVSYDEWDYDLPARVRDGIAIITTAASTMLSEHNSIPQSKSSCNNIQESRVYEAHMLKRYLINVTFEGRNLSFSEDGYQMHPKLVIILLNQERKWERVGKYKDRSLKMKYYVWPVFDLYPNSEEHKDEHLSIVTLEEAPFVIVEDVDPLSGTCMRNTVPCRKQIRPENRTEEGGNYIKRCCKGFCIDILKKIAKTVKFTYDLYLVTNGKHGKKINGTWNGMIGEVVTKRAYMAVGSLTINEERSEVVDFSVPFIETGISVMVSRSNGTVSPSAFLEPFSADVWVMMFVMLLIVSAVAVFVFEYFSPVGYNRCLADGREPGGPSFTIGKAIWLLWGLVFNNSVPVQNPKGTTSKIMVSVWAFFAVIFLASYTANLAAFMIQEEYVDQVSGLSDKKFQRPNDFSPAFRFGTVPNGSTERNIRNNYLEMHSYMVKFNQRSVQDALLSLKSGKLDAFIYDAAVLNYMAGRDEGCKLVTIGSGKVFATTGYGIAIQKDSGWKRQVDLAILQLFGDGEMEELEALWLTGICHNEKNEVMSSQLDIDNMAGVFYMLAAAMALSLITFIMEHLFFWQLRHCFMGVCSGKPGMVFSISRGIYSCIHGVAIEDRQSALDSPSATMNNTHSNILRLLRTAKNMANLSGVNGSPQSALDFIRRESSVYDISEHRRSFTHSDCKSFQPEENLFSDYISEVERTFGNLQLKDSNVYQDHFHHHRPHSIGSNSSIDGLYDCDNAPFTTQPRSLSKKPLDIGLPSKHPSPQIGDLYGKFSFKSDHYGAPDDLIRSDVSDISTHTVTYGNIEGNAKRRKQYKDSLKKRPASAKSRREFDEIELAYRRRQRSPDHKRYFRDKEGLRDFYLDQFRTKENNPHWEHVDLTHIYAERADDFKHDTSCSNRQHQKHVGEFVQTDRKHGSGGNAWEKNMSNIEWEDRASSNFCRNCPSKMHNYTGQNTNRPACIRCEVCKKAGNLYDISEDNSLQDLEARPIQAPNSKYPQSPNGKAQKRNRSKLHRQHSYDTFVDLQKEDVTLAPRSVSLKDKERFLDGSPYAHMFEMPNETSFTSKSHGPTHNPGGYMLSRSLYPDRVTQNPFIPTFGDDQCLLHGSKPYYFRQPAIGGLKGRADFRGAGKSLSAQHSGPSGHFQKDICIGNQPNACVSNNKNPRSFNNSTNGHVYEKLSSIESDV.

The first 24 residues, 1–24, serve as a signal peptide directing secretion; that stretch reads MRPTEACCYLKISLIILFYMGCYA. The Extracellular portion of the chain corresponds to 25–554; it reads QKHPNMDIAV…SAFLEPFSAD (530 aa). Cys-81 and Cys-316 are disulfide-bonded. Residues His-122 and Glu-279 each contribute to the Zn(2+) site. N-linked (GlcNAc...) asparagine glycosylation is present at Asn-336. 2 cysteine pairs are disulfide-bonded: Cys-426-Cys-453 and Cys-433-Cys-454. Residues Thr-511 and Arg-516 each coordinate L-glutamate. Residues 555 to 573 form a helical membrane-spanning segment; sequence VWVMMFVMLLIVSAVAVFV. Over 574 to 600 the chain is Cytoplasmic; that stretch reads FEYFSPVGYNRCLADGREPGGPSFTIG. Residues 601 to 620 constitute an intramembrane region (discontinuously helical); it reads KAIWLLWGLVFNNSVPVQNP. Positions 601-620 are pore-forming; sequence KAIWLLWGLVFNNSVPVQNP. Topologically, residues 621–627 are cytoplasmic; sequence KGTTSKI. The helical transmembrane segment at 628-643 threads the bilayer; the sequence is MVSVWAFFAVIFLASY. Topologically, residues 644-819 are extracellular; that stretch reads TANLAAFMIQ…LDIDNMAGVF (176 aa). The N-linked (GlcNAc...) asparagine glycan is linked to Asn-685. L-glutamate-binding positions include 687–688 and Asp-729; that span reads ST. Cys-743 and Cys-798 form a disulfide bridge. The helical transmembrane segment at 820–839 threads the bilayer; sequence YMLAAAMALSLITFIMEHLF. At 840 to 1448 the chain is on the cytoplasmic side; that stretch reads FWQLRHCFMG…EKLSSIESDV (609 aa). Over residues 1254–1265 the composition is skewed to polar residues; it reads APNSKYPQSPNG. The segment at 1254–1277 is disordered; the sequence is APNSKYPQSPNGKAQKRNRSKLHR. A compositionally biased stretch (basic residues) spans 1267 to 1277; that stretch reads AQKRNRSKLHR.

The protein belongs to the glutamate-gated ion channel (TC 1.A.10.1) family. NR2B/GRIN2B subfamily. Heterotetramer. Forms heterotetrameric channels composed of two GluN1/zeta subunits (GRIN1), and two identical GluN2/epsilon subunits (GRIN2A, GRIN2B, GRIN2C or GRIN2D) or GluN3 subunits (GRIN3A or GRIN3B) (in vitro). In vivo, the subunit composition may depend on the expression levels of the different subunits. Detected in oocytes.

The protein localises to the cell membrane. It is found in the postsynaptic cell membrane. The enzyme catalyses Ca(2+)(in) = Ca(2+)(out). It catalyses the reaction Na(+)(in) = Na(+)(out). It carries out the reaction K(+)(in) = K(+)(out). In terms of biological role, component of N-methyl-D-aspartate (NMDA) receptors (NMDARs) that function as heterotetrameric, ligand-gated cation channels with high calcium permeability and voltage-dependent block by Mg(2+). Channel activation requires binding of the neurotransmitter L-glutamate to the GluN2 subunit, glycine binding to the GluN1 subunit, plus membrane depolarization to eliminate channel inhibition by Mg(2+). NMDARs mediate simultaneously the potasium efflux and the influx of calcium and sodium. Each GluN2 subunit confers differential attributes to channel properties, including activation, deactivation and desensitization kinetics, pH sensitivity, Ca2(+) permeability, and binding to allosteric modulators. The protein is Glutamate receptor ionotropic, NMDA 2B of Xenopus laevis (African clawed frog).